A 580-amino-acid chain; its full sequence is MIQQLPMVNVELMISNLRILVESKQFSSAEFLGNFVISVPNQQKTPHQNIISFSLFGDSLFGKNEFVRSLKYFKQSLDILFKVYNNPNNNNNNNNKQADFDNKQFEYELKYKISLCYIKINRNNLAISYLESIPFSSRGLDTHLTIARLYKDIGKEKSKECIISYKEVIKLCPLCLEAINSLKEMGENVDQVLIPSINKFQQKNNSFNSNNIIDLSWISLLSMSQYEMKRNQPEKSLILLKKVESKFSTNLYVLEKLALSYLYHDEPSIINTFNIFQKIRLLDPYYIGSMDIFCSLLKRRSLQFELNKVCNDLVASNPYCAETWTSVALFYFLKENVEKSLENVDRAISIKESHEFAHSLKGEILLSLDEPREALPSLERAFQLSKNILTARELVRCHLILNQMKEALVVAETINNLSPDYSKTMALLGMVLANQPEEREEARKILTKALTLSPHCTDTVLTLSKLNVVEGRFQEAIDILNSQLEYQETDLMHTEIAGVYLTKDYHEDAMIHYNSALEINPQYEPASRGIARLELIMKGIDPDQELDQENDDDDQEEGEGENDQEENDDDDNDDDDEYIS.

TPR repeat units lie at residues 50 to 83 (IISF…LFKV), 107 to 140 (YELK…SRGL), 141 to 175 (DTHL…CPLC), 253 to 286 (VLEK…DPYY), 321 to 354 (AETW…KESH), 356 to 388 (FAHS…SKNI), 390 to 421 (TARE…SPDY), 422 to 456 (SKTM…SPHC), 458 to 490 (DTVL…QETD), and 491 to 523 (LMHT…NPQY). Residues 539-580 (GIDPDQELDQENDDDDQEEGEGENDQEENDDDDNDDDDEYIS) are disordered. Residues 542–580 (PDQELDQENDDDDQEEGEGENDQEENDDDDNDDDDEYIS) are compositionally biased toward acidic residues.

This sequence belongs to the APC7 family. As to quaternary structure, the APC/C is composed of at least 13 subunits that stay tightly associated throughout the cell cycle: anapc1, anapc2, anapc3, anapc4, anapc5, anapc6, anapc7, anapc8, anapc10, anapc11, cdc20, cdc26 and cdh1.

The protein resides in the nucleus. It functions in the pathway protein modification; protein ubiquitination. Its function is as follows. Component of the anaphase promoting complex/cyclosome (APC/C), a cell cycle-regulated E3 ubiquitin-protein ligase complex that controls progression through mitosis and the G1 phase of the cell cycle. In Dictyostelium discoideum (Social amoeba), this protein is Anaphase-promoting complex subunit 7 (anapc7).